The primary structure comprises 189 residues: Cytidylate kinase (189 aa).

7-15 (GPPGSGKTS) contacts ATP.

The protein belongs to the cytidylate kinase family. Type 2 subfamily.

It is found in the cytoplasm. It catalyses the reaction CMP + ATP = CDP + ADP. The catalysed reaction is dCMP + ATP = dCDP + ADP. The protein is Cytidylate kinase of Saccharolobus islandicus (strain L.S.2.15 / Lassen #1) (Sulfolobus islandicus).